We begin with the raw amino-acid sequence, 468 residues long: Glutamate--tRNA ligase 2 (468 aa).

The 'HIGH' region signature appears at 9-19; the sequence is PSPTGHLHIGG. Zn(2+) contacts are provided by Cys-98, Cys-100, Cys-125, and His-127. A 'KMSKS' region motif is present at residues 236–240; that stretch reads RLSKR. An ATP-binding site is contributed by Lys-239.

It belongs to the class-I aminoacyl-tRNA synthetase family. Glutamate--tRNA ligase type 1 subfamily. In terms of assembly, monomer. The cofactor is Zn(2+).

The protein localises to the cytoplasm. The catalysed reaction is tRNA(Glu) + L-glutamate + ATP = L-glutamyl-tRNA(Glu) + AMP + diphosphate. Catalyzes the attachment of glutamate to tRNA(Glu) in a two-step reaction: glutamate is first activated by ATP to form Glu-AMP and then transferred to the acceptor end of tRNA(Glu). The protein is Glutamate--tRNA ligase 2 of Methylococcus capsulatus (strain ATCC 33009 / NCIMB 11132 / Bath).